The sequence spans 145 residues: 3-dehydroquinate dehydratase (145 aa).

The active-site Proton acceptor is tyrosine 24. Residues asparagine 76, histidine 82, and aspartate 89 each contribute to the substrate site. The Proton donor role is filled by histidine 102. Residues 103–104 and arginine 113 contribute to the substrate site; that span reads LS.

The protein belongs to the type-II 3-dehydroquinase family. As to quaternary structure, homododecamer.

It catalyses the reaction 3-dehydroquinate = 3-dehydroshikimate + H2O. It functions in the pathway metabolic intermediate biosynthesis; chorismate biosynthesis; chorismate from D-erythrose 4-phosphate and phosphoenolpyruvate: step 3/7. In terms of biological role, catalyzes a trans-dehydration via an enolate intermediate. This is 3-dehydroquinate dehydratase from Nitrosomonas eutropha (strain DSM 101675 / C91 / Nm57).